We begin with the raw amino-acid sequence, 308 residues long: Transaldolase (308 aa).

The Schiff-base intermediate with substrate role is filled by Lys-125.

The protein belongs to the transaldolase family. Type 1 subfamily. As to quaternary structure, homodimer.

It is found in the cytoplasm. The catalysed reaction is D-sedoheptulose 7-phosphate + D-glyceraldehyde 3-phosphate = D-erythrose 4-phosphate + beta-D-fructose 6-phosphate. The protein operates within carbohydrate degradation; pentose phosphate pathway; D-glyceraldehyde 3-phosphate and beta-D-fructose 6-phosphate from D-ribose 5-phosphate and D-xylulose 5-phosphate (non-oxidative stage): step 2/3. Its function is as follows. Transaldolase is important for the balance of metabolites in the pentose-phosphate pathway. The chain is Transaldolase from Pseudomonas putida (strain W619).